The chain runs to 76 residues: Rhesus theta defensin-1/3 subunit A (76 aa).

The N-terminal stretch at 1–22 (MRTFALLTAMLLLVALHAQAEA) is a signal peptide. The propeptide occupies 23–64 (RQARADEAAAQQQPGTDDQGMAHSFTWPENAALPLSESAKGL). The segment at 25–45 (ARADEAAAQQQPGTDDQGMAH) is disordered. Residue Arg-65 forms a Cyclopeptide (Arg-Cys) (interchain with C-73 in subunit A); in form RTD-3 linkage. A Cyclopeptide (Arg-Cys) (interchain with C-73 in subunit B); in form RTD-1 cross-link involves residue Arg-65. The cysteines at positions 68 and 73 are disulfide-linked. Residue Cys-73 forms a Cyclopeptide (Cys-Arg) (interchain with R-65 in subunit A); in form RTD-3 linkage. A Cyclopeptide (Cys-Arg) (interchain with R-65 in subunit B); in form RTD-1 cross-link involves residue Cys-73. Positions 74–76 (RLL) are excised as a propeptide.

The protein belongs to the alpha-defensin family. Theta subfamily. In terms of assembly, RTD-1 is a cyclic heterodimer composed of subunits A and B; disulfide-linked. RTD-3 is a cyclic homodimer composed of two subunits A; disulfide-linked. Post-translationally, forms a cyclic peptide with subunit A (RTD-3) or with subunit B (RTD-1). An additional intersubunit disulfide bond is formed. RTD-1 is expressed in bone marrow. Detected in promyelocytes, myelocytes and mature neutrophils and monocytes.

In terms of biological role, RTD-1 and RTD-3 have similar antimicrobial activities against the Gram-positive bacteria S.aureus 502A and L.monocytogenes, the Gram-negative bacteria S.typhimurium and E.coli ML35, and the fungi C.albicans 16820 and C.neoformans 271A. The sequence is that of Rhesus theta defensin-1/3 subunit A (RTD1A) from Macaca mulatta (Rhesus macaque).